A 269-amino-acid chain; its full sequence is D-aminoacyl-tRNA deacylase (269 aa).

This sequence belongs to the DtdA deacylase family. In terms of assembly, monomer. The cofactor is Zn(2+).

It carries out the reaction a D-aminoacyl-tRNA + H2O = a tRNA + a D-alpha-amino acid + H(+). The enzyme catalyses glycyl-tRNA(Ala) + H2O = tRNA(Ala) + glycine + H(+). Functionally, D-aminoacyl-tRNA deacylase with broad substrate specificity. By recycling D-aminoacyl-tRNA to D-amino acids and free tRNA molecules, this enzyme counteracts the toxicity associated with the formation of D-aminoacyl-tRNA entities in vivo. This chain is D-aminoacyl-tRNA deacylase, found in Caldivirga maquilingensis (strain ATCC 700844 / DSM 13496 / JCM 10307 / IC-167).